We begin with the raw amino-acid sequence, 267 residues long: NAD-capped RNA hydrolase NudC (267 aa).

Arginine 70 is a binding site for substrate. Residues cysteine 99 and cysteine 102 each contribute to the Zn(2+) site. Residue glutamate 112 coordinates substrate. Residues cysteine 117 and cysteine 122 each contribute to the Zn(2+) site. Tyrosine 127 is a binding site for substrate. The Nudix hydrolase domain occupies 128–257; that stretch reads PVICPSIIVA…TIARALIEAT (130 aa). Residues alanine 166, glutamate 182, and glutamate 186 each contribute to the a divalent metal cation site. The Nudix box motif lies at 167–188; the sequence is GFVEVGESFEQTIHREVFEETG. 200 to 207 is a binding site for substrate; the sequence is QPWAFPNS. Glutamate 227 is a binding site for a divalent metal cation. Substrate is bound at residue alanine 250.

It belongs to the Nudix hydrolase family. NudC subfamily. As to quaternary structure, homodimer. The cofactor is Mg(2+). Mn(2+) is required as a cofactor. It depends on Zn(2+) as a cofactor.

It catalyses the reaction a 5'-end NAD(+)-phospho-ribonucleoside in mRNA + H2O = a 5'-end phospho-adenosine-phospho-ribonucleoside in mRNA + beta-nicotinamide D-ribonucleotide + 2 H(+). It carries out the reaction NAD(+) + H2O = beta-nicotinamide D-ribonucleotide + AMP + 2 H(+). The catalysed reaction is NADH + H2O = reduced beta-nicotinamide D-ribonucleotide + AMP + 2 H(+). In terms of biological role, mRNA decapping enzyme that specifically removes the nicotinamide adenine dinucleotide (NAD) cap from a subset of mRNAs by hydrolyzing the diphosphate linkage to produce nicotinamide mononucleotide (NMN) and 5' monophosphate mRNA. The NAD-cap is present at the 5'-end of some mRNAs and stabilizes RNA against 5'-processing. Has preference for mRNAs with a 5'-end purine. Catalyzes the hydrolysis of a broad range of dinucleotide pyrophosphates. This chain is NAD-capped RNA hydrolase NudC, found in Mannheimia succiniciproducens (strain KCTC 0769BP / MBEL55E).